A 409-amino-acid polypeptide reads, in one-letter code: Nucleoprotein (409 aa).

Disordered stretches follow at residues 1 to 32 (MASG…SSGN), 46 to 69 (SPPL…QQHG), 120 to 193 (GADT…SGAE), and 238 to 259 (VDQV…DKMN). The span at 15–31 (PVIKLGGPKPPKVGSSG) shows a compositional bias: low complexity. Positions 29–160 (SSGNASWFQA…GNFRWDFIPL (132 aa)) are RNA-binding. The region spanning 31–156 (GNASWFQAIK…GGPDGNFRWD (126 aa)) is the CoV N NTD domain. Low complexity predominate over residues 162–179 (RGRSGKSTAASSAASSRA). Basic and acidic residues-rich tracts occupy residues 180-192 (PSRE…RSGA) and 247-259 (KGKE…DKMN). Serine 190 carries the post-translational modification Phosphoserine; by host. Residues 215–331 (TKAKADEMAH…QCVDGVGTRP (117 aa)) enclose the CoV N CTD domain. The segment at 226 to 333 (RYCKRTIPPG…VDGVGTRPKD (108 aa)) is dimerization. Cysteine 320 and cysteine 323 are oxidised to a cystine. A disordered region spans residues 327–409 (VGTRPKDDEP…GDSALGENEL (83 aa)). Residues 341–354 (RSSSRPATRTSSPA) show a composition bias toward low complexity. Residues 358 to 367 (PRPKKEKKTK) are compositionally biased toward basic residues. Positions 368–384 (KQDDEVDKALTSDEERN) are enriched in basic and acidic residues. The residue at position 378 (threonine 378) is a Phosphothreonine; by host. Position 379 is a phosphoserine; by host (serine 379).

The protein belongs to the gammacoronavirus nucleocapsid protein family. In terms of assembly, homooligomer. Both monomeric and oligomeric forms interact with RNA. Interacts with protein M. Interacts with NSP3; this interaction serves to tether the genome to the newly translated replicase-transcriptase complex at a very early stage of infection. ADP-ribosylated. The ADP-ribosylation is retained in the virion during infection. Post-translationally, phosphorylated on serine and threonine residues.

The protein resides in the virion. Its subcellular location is the host endoplasmic reticulum-Golgi intermediate compartment. It is found in the host Golgi apparatus. In terms of biological role, packages the positive strand viral genome RNA into a helical ribonucleocapsid (RNP) and plays a fundamental role during virion assembly through its interactions with the viral genome and membrane protein M. Plays an important role in enhancing the efficiency of subgenomic viral RNA transcription as well as viral replication. This chain is Nucleoprotein, found in Gallus gallus (Chicken).